Consider the following 298-residue polypeptide: MIIGGSASQDLAAHVAEELNDDLCYVETKKFPDGERYLRVDGEIDDEVTVIQSTGYPQDENLMELLFLISNLKDLGAKKVRVVVPYMGYARQEKRFHDGEAVSAKIVANLIQSAGADEFITFNIHEKCVLDFFDIPTTNISAMGAIAEYIDEKIDEKPLIVAPDKGAYPFAQEIAEILDCECTYLSKVRLGPDKVETRIVDVEGSSDETVNVDSVKGKKAFIIDDIIATGGTIVNAVKILKEYGAKSVDVCCVHPILVNGATMRIYAAGANSLISTNSLSADSSRVSLAKSIANVLRD.

ATP-binding positions include 33–35 and 91–92; these read DGE and RQ. Mg(2+) is bound by residues histidine 125 and aspartate 164. Residue lysine 187 is part of the active site. 2 residues coordinate D-ribose 5-phosphate: arginine 189 and aspartate 224.

Belongs to the ribose-phosphate pyrophosphokinase family. Class III (archaeal) subfamily. Requires Mg(2+) as cofactor.

It localises to the cytoplasm. It carries out the reaction D-ribose 5-phosphate + ATP = 5-phospho-alpha-D-ribose 1-diphosphate + AMP + H(+). The protein operates within metabolic intermediate biosynthesis; 5-phospho-alpha-D-ribose 1-diphosphate biosynthesis; 5-phospho-alpha-D-ribose 1-diphosphate from D-ribose 5-phosphate (route I): step 1/1. Involved in the biosynthesis of the central metabolite phospho-alpha-D-ribosyl-1-pyrophosphate (PRPP) via the transfer of pyrophosphoryl group from ATP to 1-hydroxyl of ribose-5-phosphate (Rib-5-P). The protein is Ribose-phosphate pyrophosphokinase of Methanobrevibacter smithii (strain ATCC 35061 / DSM 861 / OCM 144 / PS).